The primary structure comprises 1382 residues: Eukaryotic translation initiation factor 3 subunit A (1382 aa).

Position 68 is an N6-acetyllysine (K68). Positions 82–120 (NIKSLEDVVRAYLKMAEEKTEAAKEESQQMVLDIEDLDN) form a coiled coil. Positions 315-498 (MQRMSTRVLL…RTLSFGSDLN (184 aa)) constitute a PCI domain. 2 positions are modified to phosphoserine: S492 and S584. An interaction with EIF3B region spans residues 664-835 (LDPDFIMAKQ…REERERAERA (172 aa)). Disordered regions lie at residues 810-844 (KEEEEQRRAEEQMLKEREERERAERAKREEELREY) and 866-1382 (EERE…TVRR). Composition is skewed to basic and acidic residues over residues 866-1165 (EERE…DDSR), 1177-1328 (GWRE…DPPR), and 1336-1371 (SRDRERDRDREREGEKEKASWRAEKDRESLRRTKNE). A phosphoserine mark is found at S881, S882, and S895. The stretch at 925-934 (DEDRSHRRDE) is repeat 1. The 25 X 10 AA approximate tandem repeats of [DE]-[DE]-[DE]-R-[SEVGFPILV]-[HPSN]-[RSW]-[RL]-[DRGTIHN]-[EPMANLGDT] stretch occupies residues 925–1172 (DEDRSHRRDE…DSRPGPWRPL (248 aa)). Residues 935-942 (ERPRRLGD) form a 2; truncated repeat. 20 consecutive repeat copies span residues 943–952 (DEDREPSLRP), 953–962 (DDDRVPRRGM), 963–972 (DDDRGPRRGP), 973–982 (EEDRFSRRGA), 983–992 (DDDRPSWRNT), 993–1002 (DDDRPPRRIA), 1003–1012 (DEDRGNWRHA), 1013–1022 (DDDRPPRRGL), 1023–1032 (DEDRGSWRTA), 1033–1042 (DEDRGPRRGM), 1043–1052 (DDDRGPRRGG), 1054–1063 (DDERSSWRNA), 1064–1073 (DDDRGPRRGL), 1074–1083 (DDDRGPRRGM), 1084–1093 (DDDRGPRRGM), 1094–1103 (DDDRGPRRGM), 1104–1113 (DDDRGPRRGL), 1114–1123 (DDDRGPWRNA), 1124–1133 (DDDRIPRRGA), and 1134–1143 (EDDRGPWRNM). Position 949 is a phosphoserine (S949). Position 1028 is a phosphoserine (S1028). Residues 1144–1152 (DDDRLSRRA) form a 23; truncated repeat. Residues 1153–1162 (DDDRFPRRGD) form repeat 24. The 25; approximate repeat unit spans residues 1163-1172 (DSRPGPWRPL). S1188, S1198, S1262, S1336, and S1364 each carry phosphoserine.

In terms of assembly, interacts with EIF4G1. Component of the eukaryotic translation initiation factor 3 (eIF-3) complex, which is composed of 13 subunits: EIF3A, EIF3B, EIF3C, EIF3D, EIF3E, EIF3F, EIF3G, EIF3H, EIF3I, EIF3J, EIF3K, EIF3L and EIF3M. The eIF-3 complex appears to include 3 stable modules: module A is composed of EIF3A, EIF3B, EIF3G and EIF3I; module B is composed of EIF3F, EIF3H, and EIF3M; and module C is composed of EIF3C, EIF3D, EIF3E, EIF3L and EIF3K. EIF3C of module C binds EIF3B of module A and EIF3H of module B, thereby linking the three modules. EIF3J is a labile subunit that binds to the eIF-3 complex via EIF3B. The eIF-3 complex interacts with RPS6KB1 under conditions of nutrient depletion. Mitogenic stimulation leads to binding and activation of a complex composed of MTOR and RPTOR, leading to phosphorylation and release of RPS6KB1 and binding of EIF4B to eIF-3. Also interacts with KRT7 and PIWIL2. Post-translationally, phosphorylated. Phosphorylation is enhanced upon serum stimulation.

The protein localises to the cytoplasm. Functionally, RNA-binding component of the eukaryotic translation initiation factor 3 (eIF-3) complex, which is required for several steps in the initiation of protein synthesis. The eIF-3 complex associates with the 40S ribosome and facilitates the recruitment of eIF-1, eIF-1A, eIF-2:GTP:methionyl-tRNAi and eIF-5 to form the 43S pre-initiation complex (43S PIC). The eIF-3 complex stimulates mRNA recruitment to the 43S PIC and scanning of the mRNA for AUG recognition. The eIF-3 complex is also required for disassembly and recycling of post-termination ribosomal complexes and subsequently prevents premature joining of the 40S and 60S ribosomal subunits prior to initiation. The eIF-3 complex specifically targets and initiates translation of a subset of mRNAs involved in cell proliferation, including cell cycling, differentiation and apoptosis, and uses different modes of RNA stem-loop binding to exert either translational activation or repression. In terms of biological role, (Microbial infection) Essential for the initiation of translation on type-1 viral ribosomal entry sites (IRESs), like for HCV, PV, EV71 or BEV translation. Its function is as follows. (Microbial infection) In case of FCV infection, plays a role in the ribosomal termination-reinitiation event leading to the translation of VP2. The protein is Eukaryotic translation initiation factor 3 subunit A of Homo sapiens (Human).